We begin with the raw amino-acid sequence, 199 residues long: Recombination protein RecR (199 aa).

Residues 57 to 72 (CAECRTFTEEEVCHIC) form a C4-type zinc finger. The 96-residue stretch at 81 to 176 (GQICVVESPA…EASRIAHGVP (96 aa)) folds into the Toprim domain.

The protein belongs to the RecR family.

Its function is as follows. May play a role in DNA repair. It seems to be involved in an RecBC-independent recombinational process of DNA repair. It may act with RecF and RecO. In Vibrio parahaemolyticus serotype O3:K6 (strain RIMD 2210633), this protein is Recombination protein RecR.